A 181-amino-acid polypeptide reads, in one-letter code: ATP-dependent protease subunit HslV (181 aa).

Residue threonine 7 is part of the active site. Positions 164, 167, and 170 each coordinate Na(+).

Belongs to the peptidase T1B family. HslV subfamily. In terms of assembly, a double ring-shaped homohexamer of HslV is capped on each side by a ring-shaped HslU homohexamer. The assembly of the HslU/HslV complex is dependent on binding of ATP.

The protein resides in the cytoplasm. The catalysed reaction is ATP-dependent cleavage of peptide bonds with broad specificity.. Allosterically activated by HslU binding. In terms of biological role, protease subunit of a proteasome-like degradation complex believed to be a general protein degrading machinery. This Shouchella clausii (strain KSM-K16) (Alkalihalobacillus clausii) protein is ATP-dependent protease subunit HslV.